Reading from the N-terminus, the 212-residue chain is Ribonuclease HII (212 aa).

Positions 24 to 212 (QLVAGVDEVG…PVKKALGIEE (189 aa)) constitute an RNase H type-2 domain. A divalent metal cation is bound by residues aspartate 30, glutamate 31, and aspartate 122.

The protein belongs to the RNase HII family. Requires Mn(2+) as cofactor. It depends on Mg(2+) as a cofactor.

Its subcellular location is the cytoplasm. The enzyme catalyses Endonucleolytic cleavage to 5'-phosphomonoester.. In terms of biological role, endonuclease that specifically degrades the RNA of RNA-DNA hybrids. The polypeptide is Ribonuclease HII (Vibrio campbellii (strain ATCC BAA-1116)).